The primary structure comprises 360 residues: DNA replication and repair protein RecF (360 aa).

30-37 (GHNGSGKT) contributes to the ATP binding site.

The protein belongs to the RecF family.

It localises to the cytoplasm. Its function is as follows. The RecF protein is involved in DNA metabolism; it is required for DNA replication and normal SOS inducibility. RecF binds preferentially to single-stranded, linear DNA. It also seems to bind ATP. The sequence is that of DNA replication and repair protein RecF from Shewanella amazonensis (strain ATCC BAA-1098 / SB2B).